We begin with the raw amino-acid sequence, 134 residues long: ATP synthase epsilon chain (134 aa).

It belongs to the ATPase epsilon chain family. In terms of assembly, F-type ATPases have 2 components, CF(1) - the catalytic core - and CF(0) - the membrane proton channel. CF(1) has five subunits: alpha(3), beta(3), gamma(1), delta(1), epsilon(1). CF(0) has three main subunits: a, b and c.

It localises to the cell membrane. Functionally, produces ATP from ADP in the presence of a proton gradient across the membrane. The protein is ATP synthase epsilon chain of Pelotomaculum thermopropionicum (strain DSM 13744 / JCM 10971 / SI).